Reading from the N-terminus, the 209-residue chain is MLMIHSVANGLNHFCTWVMRLAYLNVLWILFSLAGLVVFGLMPATAAMFTVAREWAKGNTDAPVFSVFFRTFKKEWRASQILGLIVVTAALFLFADMRIAAQMDQPVLVNVFVSISLIFAFVVLYVFPVFSHFDVKIREVLSISFFIAFSRPAVTLLMAAGAVGVLCLVLFHVTFLLFFSGSLLSLILTKLSFKAFRSMDQRQEKEKAA.

Transmembrane regions (helical) follow at residues 21 to 41, 81 to 101, 107 to 127, and 159 to 179; these read LAYL…VFGL, ILGL…RIAA, VLVN…LYVF, and AAGA…LLFF.

The protein resides in the cell membrane. This is an uncharacterized protein from Bacillus subtilis (strain 168).